The chain runs to 243 residues: 3-deoxy-manno-octulosonate cytidylyltransferase (243 aa).

Belongs to the KdsB family.

The protein localises to the cytoplasm. The enzyme catalyses 3-deoxy-alpha-D-manno-oct-2-ulosonate + CTP = CMP-3-deoxy-beta-D-manno-octulosonate + diphosphate. It functions in the pathway nucleotide-sugar biosynthesis; CMP-3-deoxy-D-manno-octulosonate biosynthesis; CMP-3-deoxy-D-manno-octulosonate from 3-deoxy-D-manno-octulosonate and CTP: step 1/1. Its pathway is bacterial outer membrane biogenesis; lipopolysaccharide biosynthesis. Functionally, activates KDO (a required 8-carbon sugar) for incorporation into bacterial lipopolysaccharide in Gram-negative bacteria. The protein is 3-deoxy-manno-octulosonate cytidylyltransferase of Bartonella quintana (strain Toulouse) (Rochalimaea quintana).